A 532-amino-acid polypeptide reads, in one-letter code: Phosphoenolpyruvate carboxykinase (ATP) (532 aa).

Arginine 60, tyrosine 195, and lysine 201 together coordinate substrate. Residues lysine 201, histidine 221, and 237 to 245 (GLSGTGKTT) each bind ATP. Lysine 201 and histidine 221 together coordinate Mn(2+). Residue aspartate 258 coordinates Mn(2+). Residues glutamate 287, arginine 323, and threonine 448 each coordinate ATP. Residue arginine 323 coordinates substrate.

This sequence belongs to the phosphoenolpyruvate carboxykinase (ATP) family. Requires Mn(2+) as cofactor.

The protein localises to the cytoplasm. The catalysed reaction is oxaloacetate + ATP = phosphoenolpyruvate + ADP + CO2. It participates in carbohydrate biosynthesis; gluconeogenesis. Its function is as follows. Involved in the gluconeogenesis. Catalyzes the conversion of oxaloacetate (OAA) to phosphoenolpyruvate (PEP) through direct phosphoryl transfer between the nucleoside triphosphate and OAA. This is Phosphoenolpyruvate carboxykinase (ATP) from Christiangramia forsetii (strain DSM 17595 / CGMCC 1.15422 / KT0803) (Gramella forsetii).